An 86-amino-acid chain; its full sequence is Apolipoprotein C-I (86 aa).

The signal sequence occupies residues 1–26 (MRLFLSLPVLVVVLLMILEGPGPAQG).

Belongs to the apolipoprotein C1 family.

It localises to the secreted. In terms of biological role, inhibitor of lipoprotein binding to the low density lipoprotein (LDL) receptor, LDL receptor-related protein, and very low density lipoprotein (VLDL) receptor. Associates with high density lipoproteins (HDL) and the triacylglycerol-rich lipoproteins in the plasma and makes up about 10% of the protein of the VLDL and 2% of that of HDL. Appears to interfere directly with fatty acid uptake and is also the major plasma inhibitor of cholesteryl ester transfer protein (CETP). Binds free fatty acids and reduces their intracellular esterification. Modulates the interaction of APOE with beta-migrating VLDL and inhibits binding of beta-VLDL to the LDL receptor-related protein. This Ateles geoffroyi (Black-handed spider monkey) protein is Apolipoprotein C-I (APOC1).